The primary structure comprises 331 residues: tRNA N6-adenosine threonylcarbamoyltransferase (331 aa).

Histidine 107 and histidine 111 together coordinate Fe cation. Substrate-binding positions include leucine 129 to glycine 133, aspartate 162, glycine 175, and asparagine 269. Aspartate 297 is a binding site for Fe cation.

Belongs to the KAE1 / TsaD family. The cofactor is Fe(2+).

It is found in the cytoplasm. It carries out the reaction L-threonylcarbamoyladenylate + adenosine(37) in tRNA = N(6)-L-threonylcarbamoyladenosine(37) in tRNA + AMP + H(+). Required for the formation of a threonylcarbamoyl group on adenosine at position 37 (t(6)A37) in tRNAs that read codons beginning with adenine. Is involved in the transfer of the threonylcarbamoyl moiety of threonylcarbamoyl-AMP (TC-AMP) to the N6 group of A37, together with TsaE and TsaB. TsaD likely plays a direct catalytic role in this reaction. This is tRNA N6-adenosine threonylcarbamoyltransferase from Wolinella succinogenes (strain ATCC 29543 / DSM 1740 / CCUG 13145 / JCM 31913 / LMG 7466 / NCTC 11488 / FDC 602W) (Vibrio succinogenes).